The chain runs to 203 residues: Endo-type membrane-bound lytic murein transglycosylase A (203 aa).

Positions 1 to 15 (MKLRWLLILVVFLAG) are cleaved as a signal peptide. Residue C16 is the site of N-palmitoyl cysteine attachment. C16 carries S-diacylglycerol cysteine lipidation.

The protein belongs to the transglycosylase Slt family.

The protein localises to the cell outer membrane. The catalysed reaction is Endolytic cleavage of the (1-&gt;4)-beta-glycosidic linkage between N-acetylmuramic acid (MurNAc) and N-acetylglucosamine (GlcNAc) residues in peptidoglycan with concomitant formation of a 1,6-anhydrobond in the MurNAc residue.. Its function is as follows. Murein-degrading enzyme. May play a role in recycling of muropeptides during cell elongation and/or cell division. Preferentially cleaves at a distance of more than two disaccharide units from the ends of the glycan chain. This chain is Endo-type membrane-bound lytic murein transglycosylase A, found in Klebsiella pneumoniae subsp. pneumoniae (strain ATCC 700721 / MGH 78578).